A 279-amino-acid polypeptide reads, in one-letter code: Protein NipSnap homolog 1 (279 aa).

It belongs to the NipSnap family.

It localises to the mitochondrion matrix. In terms of biological role, protein involved in mitophagy. Accumulates on the mitochondria surface in response to mitochondrial depolarization and acts as a 'eat me' signal by recruiting proteins involved in selective autophagy. The sequence is that of Protein NipSnap homolog 1 from Danio rerio (Zebrafish).